Reading from the N-terminus, the 366-residue chain is Phospho-N-acetylmuramoyl-pentapeptide-transferase (366 aa).

Transmembrane regions (helical) follow at residues Gln-3–Ile-23, Met-52–Gly-72, Leu-80–Ala-100, Leu-120–Ala-140, Leu-161–Ile-181, Leu-197–Phe-217, Leu-238–Ala-258, Ile-262–Ala-282, Leu-287–Val-307, and Phe-341–Leu-361.

Belongs to the glycosyltransferase 4 family. MraY subfamily. Mg(2+) is required as a cofactor.

It localises to the cell membrane. The enzyme catalyses UDP-N-acetyl-alpha-D-muramoyl-L-alanyl-gamma-D-glutamyl-meso-2,6-diaminopimeloyl-D-alanyl-D-alanine + di-trans,octa-cis-undecaprenyl phosphate = di-trans,octa-cis-undecaprenyl diphospho-N-acetyl-alpha-D-muramoyl-L-alanyl-D-glutamyl-meso-2,6-diaminopimeloyl-D-alanyl-D-alanine + UMP. Its pathway is cell wall biogenesis; peptidoglycan biosynthesis. Catalyzes the initial step of the lipid cycle reactions in the biosynthesis of the cell wall peptidoglycan: transfers peptidoglycan precursor phospho-MurNAc-pentapeptide from UDP-MurNAc-pentapeptide onto the lipid carrier undecaprenyl phosphate, yielding undecaprenyl-pyrophosphoryl-MurNAc-pentapeptide, known as lipid I. The chain is Phospho-N-acetylmuramoyl-pentapeptide-transferase from Corynebacterium diphtheriae (strain ATCC 700971 / NCTC 13129 / Biotype gravis).